The following is a 1571-amino-acid chain: Phospholipid-transporting ATPase DNF1 (1571 aa).

Residues 1-94 (MSGTFHGDGH…TPKLNNGSGT (94 aa)) form a disordered region. At 1 to 214 (MSGTFHGDGH…TFLPKNILFQ (214 aa)) the chain is on the cytoplasmic side. Positions 29 to 40 (EDTHIAPTHFDD) are enriched in basic and acidic residues. Positions 42 to 56 (ATSNKYSRPQVSFND) are enriched in polar residues. Position 53 is a phosphoserine (serine 53). Over residues 66 to 76 (AEEFTFNDDTE) the composition is skewed to acidic residues. Residue threonine 70 is modified to Phosphothreonine. Positions 80–93 (HSFQPTPKLNNGSG) are enriched in polar residues. At serine 81 the chain carries Phosphoserine. Threonine 85 is modified (phosphothreonine). A Phosphoserine modification is found at serine 92. Threonine 94 is modified (phosphothreonine). A Phosphoserine modification is found at serine 104. Position 109 is a phosphothreonine (threonine 109). Residues 215–235 (FHNFANVYFLVLIILGAFQIF) traverse the membrane as a helical segment. The involved in phosphatidylcholine substrate selection stretch occupies residues 234–241 (IFGVTNPG). The Extracellular portion of the chain corresponds to 236–239 (GVTN). A helical membrane pass occupies residues 240 to 260 (PGLSAVPLVVIVIITAIKDAI). Topologically, residues 261-553 (EDSRRTVLDL…RISRELNFSV (293 aa)) are cytoplasmic. 4 positions are modified to phosphoserine: serine 351, serine 354, serine 358, and serine 365. Phosphotyrosine is present on tyrosine 368. A helical membrane pass occupies residues 554 to 574 (VINFVLLFILCFVSGIANGVY). Topologically, residues 575-594 (YDKKGRSRFSYEFGTIAGSA) are extracellular. An involved in phosphatidylcholine substrate selection region spans residues 586 to 590 (EFGTI). A helical transmembrane segment spans residues 595–615 (ATNGFVSFWVAVILYQSLVPI). The Cytoplasmic portion of the chain corresponds to 616–1188 (SLYISVEIIK…WSYKRLAEMI (573 aa)). Aspartate 667 functions as the 4-aspartylphosphate intermediate in the catalytic mechanism. 8 residues coordinate ATP: aspartate 667, lysine 668, threonine 669, glutamate 801, phenylalanine 842, serine 844, lysine 847, and lysine 871. Aspartate 667 provides a ligand contact to Mg(2+). Position 669 (threonine 669) interacts with Mg(2+). Lysine 895 participates in a covalent cross-link: Glycyl lysine isopeptide (Lys-Gly) (interchain with G-Cter in ubiquitin). ATP-binding residues include arginine 909, threonine 910, threonine 989, glycine 990, aspartate 991, arginine 1104, and lysine 1110. Residue aspartate 1130 coordinates Mg(2+). Positions 1133 and 1134 each coordinate ATP. Residue aspartate 1134 coordinates Mg(2+). A helical membrane pass occupies residues 1189–1209 (PEFFYKNMIFALALFWYGIYN). The Extracellular portion of the chain corresponds to 1210–1219 (DFDGSYLYEY). Residues 1220–1240 (TYMMFYNLAFTSLPVIFLGIL) traverse the membrane as a helical segment. Over 1241–1270 (DQDVNDTISLVVPQLYRVGILRKEWNQRKF) the chain is Cytoplasmic. A helical membrane pass occupies residues 1271–1291 (LWYMLDGLYQSIICFFFPYLV). At 1292–1307 (YHKNMIVTSNGLGLDH) the chain is on the extracellular side. A helical transmembrane segment spans residues 1308–1328 (RYFVGVYVTTIAVISCNTYVL). The Cytoplasmic segment spans residues 1329 to 1334 (LHQYRW). Residues 1335 to 1355 (DWFSGLFIALSCLVVFAWTGI) form a helical membrane-spanning segment. Topologically, residues 1356–1375 (WSSAIASREFFKAAARIYGA) are extracellular. The helical transmembrane segment at 1376–1396 (PSFWAVFFVAVLFCLLPRFTY) threads the bilayer. Arginine 1393 contacts a 1,2-diacyl-sn-glycero-3-phospho-L-serine. Residues 1397 to 1571 (DSFQKFFYPT…ASLIGTQQNN (175 aa)) lie on the Cytoplasmic side of the membrane. Serine 1506 is modified (phosphoserine). Threonine 1551 is modified (phosphothreonine). 2 positions are modified to phosphoserine: serine 1552 and serine 1563.

It belongs to the cation transport ATPase (P-type) (TC 3.A.3) family. Type IV subfamily. As to quaternary structure, component of a flippase complex consisting of DNF1 and LEM3. Interacts with LEM3; the interaction is direct and required for their mutual export from the endoplasmic reticulum. Mg(2+) serves as cofactor. Phosphorylated by FPK1 and KIN82.

It localises to the cell membrane. The protein resides in the endosome membrane. Its subcellular location is the golgi apparatus. It is found in the trans-Golgi network membrane. The protein localises to the cell septum. It localises to the bud. It carries out the reaction ATP + H2O + phospholipidSide 1 = ADP + phosphate + phospholipidSide 2.. The catalysed reaction is a 1,2-diacyl-sn-glycero-3-phosphoethanolamine(out) + ATP + H2O = a 1,2-diacyl-sn-glycero-3-phosphoethanolamine(in) + ADP + phosphate + H(+). The enzyme catalyses a 1,2-diacyl-sn-glycero-3-phosphocholine(out) + ATP + H2O = a 1,2-diacyl-sn-glycero-3-phosphocholine(in) + ADP + phosphate + H(+). It catalyses the reaction a beta-D-glucosyl-(1&lt;-&gt;1')-N-acylsphing-4-enine(out) + ATP + H2O = a beta-D-glucosyl-(1&lt;-&gt;1')-N-acylsphing-4-enine(in) + ADP + phosphate + H(+). It carries out the reaction a 1,2-diacyl-sn-glycero-3-phospho-L-serine(out) + ATP + H2O = a 1,2-diacyl-sn-glycero-3-phospho-L-serine(in) + ADP + phosphate + H(+). Functionally, catalytic component of a P4-ATPase flippase complex which catalyzes the hydrolysis of ATP coupled to the transport of glucosylceramide, phosphatidylcholine, phosphatidylethanolamine, and small amounts of phosphatidylserine from the lumenal to the cytosolic leaflet of the cell membrane and ensures the maintenance of asymmetric distribution of phospholipids. Does not appear to transport sphingomyelin, inositol phosphoceramide, or phosphatidic acid. Required for efficient endocytosis. The chain is Phospholipid-transporting ATPase DNF1 from Saccharomyces cerevisiae (strain ATCC 204508 / S288c) (Baker's yeast).